The following is a 136-amino-acid chain: ATP synthase epsilon chain (136 aa).

The protein belongs to the ATPase epsilon chain family. As to quaternary structure, F-type ATPases have 2 components, CF(1) - the catalytic core - and CF(0) - the membrane proton channel. CF(1) has five subunits: alpha(3), beta(3), gamma(1), delta(1), epsilon(1). CF(0) has three main subunits: a, b and c.

Its subcellular location is the cell membrane. Functionally, produces ATP from ADP in the presence of a proton gradient across the membrane. This is ATP synthase epsilon chain from Macrococcus caseolyticus (strain JCSC5402) (Macrococcoides caseolyticum).